The sequence spans 320 residues: Lipoyl synthase (320 aa).

The interval 1 to 29 (MVTVVDRVTNRRLRHPEKAHRPDTSVQKK) is disordered. Residues 19–29 (AHRPDTSVQKK) are compositionally biased toward basic and acidic residues. [4Fe-4S] cluster contacts are provided by cysteine 59, cysteine 64, cysteine 70, cysteine 85, cysteine 89, cysteine 92, and serine 298. The Radical SAM core domain maps to 71–287 (WSQRHASFMI…AKIGKVKGFL (217 aa)).

It belongs to the radical SAM superfamily. Lipoyl synthase family. Requires [4Fe-4S] cluster as cofactor.

It is found in the cytoplasm. It catalyses the reaction [[Fe-S] cluster scaffold protein carrying a second [4Fe-4S](2+) cluster] + N(6)-octanoyl-L-lysyl-[protein] + 2 oxidized [2Fe-2S]-[ferredoxin] + 2 S-adenosyl-L-methionine + 4 H(+) = [[Fe-S] cluster scaffold protein] + N(6)-[(R)-dihydrolipoyl]-L-lysyl-[protein] + 4 Fe(3+) + 2 hydrogen sulfide + 2 5'-deoxyadenosine + 2 L-methionine + 2 reduced [2Fe-2S]-[ferredoxin]. Its pathway is protein modification; protein lipoylation via endogenous pathway; protein N(6)-(lipoyl)lysine from octanoyl-[acyl-carrier-protein]: step 2/2. Its function is as follows. Catalyzes the radical-mediated insertion of two sulfur atoms into the C-6 and C-8 positions of the octanoyl moiety bound to the lipoyl domains of lipoate-dependent enzymes, thereby converting the octanoylated domains into lipoylated derivatives. This is Lipoyl synthase from Bartonella tribocorum (strain CIP 105476 / IBS 506).